Consider the following 245-residue polypeptide: Uracil-DNA glycosylase (245 aa).

Residue D82 is the Proton acceptor of the active site.

The protein belongs to the uracil-DNA glycosylase (UDG) superfamily. UNG family.

The protein resides in the cytoplasm. The enzyme catalyses Hydrolyzes single-stranded DNA or mismatched double-stranded DNA and polynucleotides, releasing free uracil.. Excises uracil residues from the DNA which can arise as a result of misincorporation of dUMP residues by DNA polymerase or due to deamination of cytosine. The polypeptide is Uracil-DNA glycosylase (Deinococcus geothermalis (strain DSM 11300 / CIP 105573 / AG-3a)).